The chain runs to 142 residues: Large ribosomal subunit protein uL13 (142 aa).

It belongs to the universal ribosomal protein uL13 family. As to quaternary structure, part of the 50S ribosomal subunit.

In terms of biological role, this protein is one of the early assembly proteins of the 50S ribosomal subunit, although it is not seen to bind rRNA by itself. It is important during the early stages of 50S assembly. The protein is Large ribosomal subunit protein uL13 of Janthinobacterium sp. (strain Marseille) (Minibacterium massiliensis).